Consider the following 271-residue polypeptide: PA-phosphatase related-family protein DDB_G0284367 (271 aa).

Transmembrane regions (helical) follow at residues F23–F43, I68–G88, A102–V122, F150–C170, G181–V201, and F211–M231.

This sequence belongs to the PA-phosphatase related phosphoesterase family.

The protein resides in the membrane. In Dictyostelium discoideum (Social amoeba), this protein is PA-phosphatase related-family protein DDB_G0284367.